The sequence spans 183 residues: MARYKFNPENPNRVCKAKGTNFRVHYKNTSETGRAIKGMHLHKARSYLSNVVEHKQCIPFRRHKGGVGRCAQAKNFNTTQGRWPKKSCEFMLQLLKNAESNAELRGLDVDSLVVAHVSVDAAAKMRRRTYRAHGRINPYMSSPCHIELCLEERDRVVPKGDIKTAAKKQSAKKLKKQKMMYRE.

The segment at 163 to 183 (KTAAKKQSAKKLKKQKMMYRE) is disordered. Basic residues predominate over residues 165-183 (AAKKQSAKKLKKQKMMYRE).

Belongs to the universal ribosomal protein uL22 family.

This chain is Large ribosomal subunit protein uL22 (rpl-17), found in Pectinaria gouldii (Trumpet worm).